A 638-amino-acid chain; its full sequence is Neuroendocrine convertase 2 (638 aa).

Residues 1 to 25 (MRGGCISQGKAAAGLLFCVMVFASA) form the signal peptide. The propeptide occupies 26 to 109 (ERPVFTNHFL…QQEGFNRKKR (84 aa)). A Peptidase S8 domain is found at 129–453 (QWYLINTGQA…YGVLDAGAMV (325 aa)). Catalysis depends on charge relay system residues D167 and H208. Disulfide bonds link C225-C376 and C317-C347. N375 carries an N-linked (GlcNAc...) asparagine glycan. The Charge relay system role is filled by S384. A P/Homo B domain is found at 461–597 (TVPERFHCVG…TLMLHGTQSA (137 aa)). C468 and C494 form a disulfide bridge. 2 N-linked (GlcNAc...) asparagine glycosylation sites follow: N514 and N524.

It belongs to the peptidase S8 family. Furin subfamily.

The protein resides in the cytoplasmic vesicle. Its subcellular location is the secretory vesicle. It localises to the secreted. The enzyme catalyses Release of protein hormones and neuropeptides from their precursors, generally by hydrolysis of -Lys-Arg-|- bonds.. In terms of biological role, serine endopeptidase which is involved in the processing of hormone and other protein precursors at sites comprised of pairs of basic amino acid residues. Responsible for the release of glucagon from proglucagon in pancreatic A cells. The protein is Neuroendocrine convertase 2 (PCSK2) of Bos taurus (Bovine).